Here is a 78-residue protein sequence, read N- to C-terminus: UPF0349 protein ABC2936 (78 aa).

This sequence belongs to the UPF0349 family.

In Shouchella clausii (strain KSM-K16) (Alkalihalobacillus clausii), this protein is UPF0349 protein ABC2936.